Consider the following 716-residue polypeptide: Polyribonucleotide nucleotidyltransferase (716 aa).

Residues D490 and D496 each coordinate Mg(2+). The region spanning 556–615 (PKIETLTIPTDKIREVIGSGGKVIREIVETSGAKVDINDDGVIKIASNDQAAIKKAYDMI) is the KH domain. The 69-residue stretch at 625–693 (GQIYTGKVVK…ERGKVRLGMK (69 aa)) folds into the S1 motif domain. The disordered stretch occupies residues 695 to 716 (VDQETGQEIQPEKKEREEAGEA). Basic and acidic residues predominate over residues 704 to 716 (QPEKKEREEAGEA).

This sequence belongs to the polyribonucleotide nucleotidyltransferase family. Requires Mg(2+) as cofactor.

Its subcellular location is the cytoplasm. It catalyses the reaction RNA(n+1) + phosphate = RNA(n) + a ribonucleoside 5'-diphosphate. In terms of biological role, involved in mRNA degradation. Catalyzes the phosphorolysis of single-stranded polyribonucleotides processively in the 3'- to 5'-direction. The chain is Polyribonucleotide nucleotidyltransferase from Cereibacter sphaeroides (strain KD131 / KCTC 12085) (Rhodobacter sphaeroides).